Here is a 594-residue protein sequence, read N- to C-terminus: UV-stimulated scaffold protein A homolog (594 aa).

The tract at residues 24–170 (RKNLNRFIRE…VTLKKTKFVD (147 aa)) is VHS-like. The stretch at 170–198 (DYENGAKKIEAERKRKKILEERKMKMIEN) forms a coiled coil. Residues 466–493 (RKVCLAKMKSGKLCPRKDYYTCPLHGKI) form a UVSSA-type zinc finger. Cys469, Cys479, Cys487, and His490 together coordinate Zn(2+). Residues 503-540 (INEEDRLEENYRKEQNHLKEADKIRQMIEKEYESKTKR) are a coiled coil. The segment at 533–558 (EYESKTKRRKKHDVDTTASEDVRNRL) is disordered. The segment covering 544-558 (HDVDTTASEDVRNRL) has biased composition (basic and acidic residues).

The protein belongs to the UVSSA family.

The protein resides in the chromosome. Factor involved in transcription-coupled nucleotide excision repair (TC-NER) in response to UV damage. TC-NER allows RNA polymerase II-blocking lesions to be rapidly removed from the transcribed strand of active genes. In Caenorhabditis elegans, this protein is UV-stimulated scaffold protein A homolog.